The sequence spans 157 residues: Snaclec A16 (157 aa).

A signal peptide spans 1–23 (MGRLISVSFGLLVVFLSLSGTGA). 3 disulfide bridges follow: Cys-27–Cys-38, Cys-55–Cys-149, and Cys-124–Cys-141. The region spanning 34–150 (YEGHCYKVFN…CELAYHFICM (117 aa)) is the C-type lectin domain.

The protein belongs to the snaclec family. As to quaternary structure, heterodimer; disulfide-linked. Expressed by the venom gland.

It localises to the secreted. Its function is as follows. Interferes with one step of hemostasis (modulation of platelet aggregation, or coagulation cascade, for example). This chain is Snaclec A16, found in Macrovipera lebetinus (Levantine viper).